The primary structure comprises 214 residues: MLRLLLRHHFHCLLLCAVWATPCLASPWSTLTANQNPSPPWSKLTYSKPHDAATFYCPFLYPSPPRSPLQFSGFQQVSTGPECRNETLYLLYNREGQTLVERSSTWVKKVIWYLSGRNQTILQRMPQTASKPSDGNVQISVEDAKIFGAHMVPKQTKLLRFVVNDGTRYQMCVMKLESWAHVFRDYSVSFQVRLTFTEANNQTYTFCTHPNLIV.

It belongs to the HHV-5 UL130 protein family. As to quaternary structure, forms the envelope pentamer complex (PC) composed of gH, gL, UL128, UL130, and UL131A. The pentamer interacts with host NRP2.

The protein resides in the virion membrane. Its function is as follows. Plays a role in viral entry into host cells. Forms a pentameric complex at the surface of the viral envelope together with gH, gL, UL130 and UL131. This complex is required for entry in epithelial, endothelial and myeloid host cells. Mechanistically, engages host receptor(s) including neurophilin 2/NRP2 to mediate infection. This is an uncharacterized protein from Human cytomegalovirus (strain AD169) (HHV-5).